Here is an 85-residue protein sequence, read N- to C-terminus: U4-theraphotoxin-Hhn1a (85 aa).

A signal peptide spans 1–22 (MKMTLIAILTCAAVLVLHTTAA). Residues 23–48 (EELEAESQLMEVGMPDTELAAVDEER) constitute a propeptide that is removed on maturation. 3 disulfides stabilise this stretch: Cys-52–Cys-66, Cys-56–Cys-77, and Cys-71–Cys-82.

Belongs to the neurotoxin 12 (Hwtx-2) family. 02 (Hwtx-2) subfamily. As to quaternary structure, monomer. As to expression, expressed by the venom gland.

The protein resides in the secreted. Its function is as follows. Neurotoxin active on both insects and mammals. The sequence is that of U4-theraphotoxin-Hhn1a from Cyriopagopus hainanus (Chinese bird spider).